Consider the following 1133-residue polypeptide: DNA-directed RNA polymerase III subunit RPC2 (1133 aa).

RNA is bound at residue Lys-186. Arg-195 serves as a coordination point for DNA. Arg-213 contacts RNA. Residue Asp-432 coordinates DNA. RNA contacts are provided by Gln-438 and Gln-692. Asp-753 lines the Mg(2+) pocket. The RNA site is built by Lys-896, Lys-904, and Lys-1019. The DNA site is built by Arg-1039, Ser-1040, and Arg-1046. Residues Cys-1080, Cys-1083, Cys-1092, and Cys-1095 each coordinate Zn(2+). Residues 1080-1095 (CGQCGLLGYSGWCHYC) form a C4-type zinc finger.

The protein belongs to the RNA polymerase beta chain family. As to quaternary structure, component of the RNA polymerase III (Pol III) complex consisting of 17 subunits: a ten-subunit catalytic core composed of POLR3A/RPC1, POLR3B/RPC2, POLR1C/RPAC1, POLR1D/RPAC2, POLR3K/RPC10, POLR2E/RPABC1, POLR2F/RPABC2, POLR2H/RPABC3, POLR2K/RPABC4 and POLR2L/RPABC5; a mobile stalk composed of two subunits POLR3H/RPC8 and CRCP/RPC9, protruding from the core and functioning primarily in transcription initiation; and additional subunits homologous to general transcription factors of the RNA polymerase II machinery, POLR3C/RPC3-POLR3F/RPC6-POLR3G/RPC7 heterotrimer required for transcription initiation and POLR3D/RPC4-POLR3E/RPC5 heterodimer involved in both transcription initiation and termination. Mg(2+) serves as cofactor.

The protein localises to the nucleus. The protein resides in the cytoplasm. It localises to the cytosol. It carries out the reaction RNA(n) + a ribonucleoside 5'-triphosphate = RNA(n+1) + diphosphate. Its function is as follows. Catalytic core component of RNA polymerase III (Pol III), a DNA-dependent RNA polymerase which synthesizes small non-coding RNAs using the four ribonucleoside triphosphates as substrates. Synthesizes 5S rRNA, snRNAs, tRNAs and miRNAs from at least 500 distinct genomic loci. Pol III-mediated transcription cycle proceeds through transcription initiation, transcription elongation and transcription termination stages. During transcription initiation, Pol III is recruited to DNA promoters type I, II or III with the help of general transcription factors and other specific initiation factors. Once the polymerase has escaped from the promoter it enters the elongation phase during which RNA is actively polymerized, based on complementarity with the template DNA strand. Transcription termination involves the release of the RNA transcript and polymerase from the DNA. Forms Pol III active center together with the largest subunit POLR3A/RPC1. A single-stranded DNA template strand of the promoter is positioned within the central active site cleft of Pol III. Appends one nucleotide at a time to the 3' end of the nascent RNA, with POLR3A/RPC1 contributing a Mg(2+)-coordinating DxDGD motif, and POLR3B/RPC2 participating in the coordination of a second Mg(2+) ion and providing lysine residues believed to facilitate Watson-Crick base pairing between the incoming nucleotide and template base. Typically, Mg(2+) ions direct a 5' nucleoside triphosphate to form a phosphodiester bond with the 3' hydroxyl of the preceding nucleotide of the nascent RNA, with the elimination of pyrophosphate. Pol III plays a key role in sensing and limiting infection by intracellular bacteria and DNA viruses. Acts as a nuclear and cytosolic DNA sensor involved in innate immune response. Can sense non-self dsDNA that serves as template for transcription into dsRNA. The non-self RNA polymerase III transcripts, such as Epstein-Barr virus-encoded RNAs (EBERs) induce type I interferon and NF-kappa-B through the RIG-I pathway. The protein is DNA-directed RNA polymerase III subunit RPC2 of Homo sapiens (Human).